The primary structure comprises 144 residues: Large ribosomal subunit protein uL11 (144 aa).

Belongs to the universal ribosomal protein uL11 family. Part of the ribosomal stalk of the 50S ribosomal subunit. Interacts with L10 and the large rRNA to form the base of the stalk. L10 forms an elongated spine to which L12 dimers bind in a sequential fashion forming a multimeric L10(L12)X complex. Post-translationally, one or more lysine residues are methylated.

Forms part of the ribosomal stalk which helps the ribosome interact with GTP-bound translation factors. This Neisseria gonorrhoeae (strain ATCC 700825 / FA 1090) protein is Large ribosomal subunit protein uL11.